Here is a 276-residue protein sequence, read N- to C-terminus: NAD-capped RNA hydrolase NudC (276 aa).

R82 contacts substrate. Zn(2+) contacts are provided by C112 and C115. Substrate is bound at residue E125. Zn(2+) is bound by residues C130 and C133. Y138 provides a ligand contact to substrate. In terms of domain architecture, Nudix hydrolase spans 139–262; sequence PRISPSMIVL…SIARYLIDLY (124 aa). Residues A172, E188, and E192 each contribute to the a divalent metal cation site. The Nudix box signature appears at 173 to 194; that stretch reads GFAEPGESAEDCLVREVREEVA. Residue 206–213 coordinates substrate; sequence QCWPFPHS. Position 233 (E233) interacts with a divalent metal cation. Position 255 (A255) interacts with substrate.

The protein belongs to the Nudix hydrolase family. NudC subfamily. In terms of assembly, homodimer. The cofactor is Mg(2+). Requires Mn(2+) as cofactor. It depends on Zn(2+) as a cofactor.

The enzyme catalyses a 5'-end NAD(+)-phospho-ribonucleoside in mRNA + H2O = a 5'-end phospho-adenosine-phospho-ribonucleoside in mRNA + beta-nicotinamide D-ribonucleotide + 2 H(+). The catalysed reaction is NAD(+) + H2O = beta-nicotinamide D-ribonucleotide + AMP + 2 H(+). It carries out the reaction NADH + H2O = reduced beta-nicotinamide D-ribonucleotide + AMP + 2 H(+). Functionally, mRNA decapping enzyme that specifically removes the nicotinamide adenine dinucleotide (NAD) cap from a subset of mRNAs by hydrolyzing the diphosphate linkage to produce nicotinamide mononucleotide (NMN) and 5' monophosphate mRNA. The NAD-cap is present at the 5'-end of some mRNAs and stabilizes RNA against 5'-processing. Has preference for mRNAs with a 5'-end purine. Catalyzes the hydrolysis of a broad range of dinucleotide pyrophosphates. This Pseudomonas putida (strain GB-1) protein is NAD-capped RNA hydrolase NudC.